Here is a 145-residue protein sequence, read N- to C-terminus: Basic phospholipase A2 cPm05 (145 aa).

Residues 1–21 (MYPAHLLVLLAVCISLLGASA) form the signal peptide. Residues 22–27 (IPPLPL) constitute a propeptide that is removed on maturation. 7 cysteine pairs are disulfide-bonded: Cys-38–Cys-98, Cys-54–Cys-144, Cys-56–Cys-72, Cys-71–Cys-125, Cys-78–Cys-118, Cys-87–Cys-111, and Cys-105–Cys-116. Residues Tyr-55, Gly-57, and Gly-59 each contribute to the Ca(2+) site. His-75 is a catalytic residue. Asp-76 contributes to the Ca(2+) binding site. Residue Asp-119 is part of the active site.

The protein belongs to the phospholipase A2 family. Group I subfamily. D49 sub-subfamily. The cofactor is Ca(2+). In terms of tissue distribution, expressed by the venom gland.

The protein localises to the secreted. It catalyses the reaction a 1,2-diacyl-sn-glycero-3-phosphocholine + H2O = a 1-acyl-sn-glycero-3-phosphocholine + a fatty acid + H(+). PLA2 catalyzes the calcium-dependent hydrolysis of the 2-acyl groups in 3-sn-phosphoglycerides. The sequence is that of Basic phospholipase A2 cPm05 from Laticauda semifasciata (Black-banded sea krait).